A 271-amino-acid polypeptide reads, in one-letter code: 3-deoxy-manno-octulosonate cytidylyltransferase (271 aa).

This sequence belongs to the KdsB family.

Its subcellular location is the cytoplasm. It catalyses the reaction 3-deoxy-alpha-D-manno-oct-2-ulosonate + CTP = CMP-3-deoxy-beta-D-manno-octulosonate + diphosphate. The protein operates within nucleotide-sugar biosynthesis; CMP-3-deoxy-D-manno-octulosonate biosynthesis; CMP-3-deoxy-D-manno-octulosonate from 3-deoxy-D-manno-octulosonate and CTP: step 1/1. It functions in the pathway bacterial outer membrane biogenesis; lipopolysaccharide biosynthesis. Activates KDO (a required 8-carbon sugar) for incorporation into bacterial lipopolysaccharide in Gram-negative bacteria. This Leptothrix cholodnii (strain ATCC 51168 / LMG 8142 / SP-6) (Leptothrix discophora (strain SP-6)) protein is 3-deoxy-manno-octulosonate cytidylyltransferase.